A 335-amino-acid chain; its full sequence is 3-hydroxy-3-methylglutaryl-CoA lyase, cytoplasmic (335 aa).

Gly-2 carries N-myristoyl glycine lipidation. The Pyruvate carboxyltransferase domain maps to 43–310; the sequence is VKIVEVGPRD…ETGVDLLKVM (268 aa). Residue Arg-51 coordinates substrate. Asp-52 contributes to the a divalent metal cation binding site. Lys-58 bears the N6-acetyllysine mark. Residues His-243 and His-245 each coordinate a divalent metal cation. Cys-276 is a catalytic residue. Asn-285 is an a divalent metal cation binding site.

Belongs to the HMG-CoA lyase family. The cofactor is a divalent metal cation.

The protein resides in the cytoplasm. It localises to the cytosol. It is found in the endoplasmic reticulum membrane. It catalyses the reaction (3S)-3-hydroxy-3-methylglutaryl-CoA = acetoacetate + acetyl-CoA. The protein operates within metabolic intermediate metabolism; (S)-3-hydroxy-3-methylglutaryl-CoA degradation; acetoacetate from (S)-3-hydroxy-3-methylglutaryl-CoA: step 1/1. Its function is as follows. Non-mitochondrial 3-hydroxy-3-methylglutaryl-CoA lyase that catalyzes a cation-dependent cleavage of (S)-3-hydroxy-3-methylglutaryl-CoA into acetyl-CoA and acetoacetate, a key step in ketogenesis, the products of which support energy production in nonhepatic animal tissues. The polypeptide is 3-hydroxy-3-methylglutaryl-CoA lyase, cytoplasmic (hmgcll1) (Danio rerio (Zebrafish)).